Here is a 167-residue protein sequence, read N- to C-terminus: Peptide deformylase (167 aa).

Cys-91 and His-133 together coordinate Fe cation. Glu-134 is a catalytic residue. His-137 is a Fe cation binding site.

This sequence belongs to the polypeptide deformylase family. Fe(2+) serves as cofactor.

It catalyses the reaction N-terminal N-formyl-L-methionyl-[peptide] + H2O = N-terminal L-methionyl-[peptide] + formate. Its function is as follows. Removes the formyl group from the N-terminal Met of newly synthesized proteins. Requires at least a dipeptide for an efficient rate of reaction. N-terminal L-methionine is a prerequisite for activity but the enzyme has broad specificity at other positions. This chain is Peptide deformylase, found in Chromobacterium violaceum (strain ATCC 12472 / DSM 30191 / JCM 1249 / CCUG 213 / NBRC 12614 / NCIMB 9131 / NCTC 9757 / MK).